Reading from the N-terminus, the 304-residue chain is Quinolinate synthase (304 aa).

Residues histidine 23 and serine 40 each coordinate iminosuccinate. A [4Fe-4S] cluster-binding site is contributed by cysteine 85. Iminosuccinate-binding positions include 111–113 (YVN) and serine 128. Residue cysteine 171 coordinates [4Fe-4S] cluster. Residues 197 to 199 (HPE) and threonine 214 each bind iminosuccinate. Position 259 (cysteine 259) interacts with [4Fe-4S] cluster.

The protein belongs to the quinolinate synthase family. Type 2 subfamily. [4Fe-4S] cluster is required as a cofactor.

It localises to the cytoplasm. It catalyses the reaction iminosuccinate + dihydroxyacetone phosphate = quinolinate + phosphate + 2 H2O + H(+). It functions in the pathway cofactor biosynthesis; NAD(+) biosynthesis; quinolinate from iminoaspartate: step 1/1. Functionally, catalyzes the condensation of iminoaspartate with dihydroxyacetone phosphate to form quinolinate. The sequence is that of Quinolinate synthase from Pelobacter propionicus (strain DSM 2379 / NBRC 103807 / OttBd1).